Consider the following 88-residue polypeptide: ATP synthase F(0) complex subunit f, mitochondrial (88 aa).

Ala-2 is subject to N-acetylalanine. A Phosphoserine modification is found at Ser-3. At Lys-16 the chain carries N6-acetyllysine. Residues 62 to 79 (MVLAAYVVFSYCISYKEL) form a helical membrane-spanning segment.

It belongs to the ATPase F chain family. In terms of assembly, component of the ATP synthase complex composed at least of ATP5F1A/subunit alpha, ATP5F1B/subunit beta, ATP5MC1/subunit c (homooctomer), MT-ATP6/subunit a, MT-ATP8/subunit 8, ATP5ME/subunit e, ATP5MF/subunit f, ATP5MG/subunit g, ATP5MK/subunit k, ATP5MJ/subunit j, ATP5F1C/subunit gamma, ATP5F1D/subunit delta, ATP5F1E/subunit epsilon, ATP5PF/subunit F6, ATP5PB/subunit b, ATP5PD/subunit d, ATP5PO/subunit OSCP. ATP synthase complex consists of a soluble F(1) head domain (subunits alpha(3) and beta(3)) - the catalytic core - and a membrane F(0) domain - the membrane proton channel (subunits c, a, 8, e, f, g, k and j). These two domains are linked by a central stalk (subunits gamma, delta, and epsilon) rotating inside the F1 region and a stationary peripheral stalk (subunits F6, b, d, and OSCP).

The protein localises to the mitochondrion. The protein resides in the mitochondrion inner membrane. Subunit f, of the mitochondrial membrane ATP synthase complex (F(1)F(0) ATP synthase or Complex V) that produces ATP from ADP in the presence of a proton gradient across the membrane which is generated by electron transport complexes of the respiratory chain. ATP synthase complex consist of a soluble F(1) head domain - the catalytic core - and a membrane F(1) domain - the membrane proton channel. These two domains are linked by a central stalk rotating inside the F(1) region and a stationary peripheral stalk. During catalysis, ATP synthesis in the catalytic domain of F(1) is coupled via a rotary mechanism of the central stalk subunits to proton translocation. In vivo, can only synthesize ATP although its ATP hydrolase activity can be activated artificially in vitro. Part of the complex F(0) domain. This Rattus norvegicus (Rat) protein is ATP synthase F(0) complex subunit f, mitochondrial.